The sequence spans 59 residues: Chromatin protein Cren7 (59 aa).

The protein belongs to the Cren7 family. In terms of assembly, monomer. Methylated at multiple sites, to varying extents.

Its subcellular location is the chromosome. The protein resides in the cytoplasm. A chromatin protein, binds double-stranded DNA without sequence specificity. Constrains negative DNA supercoils. The sequence is that of Chromatin protein Cren7 from Pyrobaculum aerophilum (strain ATCC 51768 / DSM 7523 / JCM 9630 / CIP 104966 / NBRC 100827 / IM2).